The primary structure comprises 156 residues: MPRRRVVGQRKILPDPKFHSELLAKFINVIMQDGKKSTAEKIIYKALDVVAEKKSENHLSILEAALDNVRPSVEVKSRRVGGSTYQVPCEVRPVRRNALAMRWLVEAARKRGEKSMALRLAGEMLDASENKGTAVKKREDVHRMAEANKAFAHYRW.

It belongs to the universal ribosomal protein uS7 family. In terms of assembly, part of the 30S ribosomal subunit. Contacts proteins S9 and S11.

In terms of biological role, one of the primary rRNA binding proteins, it binds directly to 16S rRNA where it nucleates assembly of the head domain of the 30S subunit. Is located at the subunit interface close to the decoding center, probably blocks exit of the E-site tRNA. This Shewanella frigidimarina (strain NCIMB 400) protein is Small ribosomal subunit protein uS7.